The primary structure comprises 149 residues: Calmodulin (149 aa).

Alanine 2 is subject to N-acetylalanine. EF-hand domains lie at 8–43, 44–79, 81–116, and 117–149; these read EQIA…VGQN, PTEA…KMKD, DSEE…LGEK, and LTDE…MMSK. Residues aspartate 21, aspartate 23, aspartate 25, threonine 27, glutamate 32, aspartate 57, aspartate 59, asparagine 61, threonine 63, glutamate 68, aspartate 94, aspartate 96, asparagine 98, glutamate 105, aspartate 130, aspartate 132, aspartate 134, glutamine 136, and glutamate 141 each coordinate Ca(2+).

It belongs to the calmodulin family.

Functionally, calmodulin mediates the control of a large number of enzymes, ion channels and other proteins by Ca(2+). Among the enzymes to be stimulated by the calmodulin-Ca(2+) complex are a number of protein kinases and phosphatases. In Achlya klebsiana, this protein is Calmodulin (CMD1).